Reading from the N-terminus, the 61-residue chain is Small ribosomal subunit protein uS14 (61 aa).

4 residues coordinate Zn(2+): Cys-24, Cys-27, Cys-40, and Cys-43.

It belongs to the universal ribosomal protein uS14 family. Zinc-binding uS14 subfamily. Part of the 30S ribosomal subunit. Contacts proteins S3 and S10. Requires Zn(2+) as cofactor.

Binds 16S rRNA, required for the assembly of 30S particles and may also be responsible for determining the conformation of the 16S rRNA at the A site. This Campylobacter lari (strain RM2100 / D67 / ATCC BAA-1060) protein is Small ribosomal subunit protein uS14.